A 386-amino-acid chain; its full sequence is Succinate--CoA ligase [ADP-forming] subunit beta (386 aa).

The ATP-grasp domain occupies 9 to 237 (KEVLRDFGVN…LSAEHPLEVE (229 aa)). ATP is bound by residues Lys-45, 52-54 (GRG), Val-94, and Glu-101. Mg(2+) is bound by residues Asn-192 and Asp-206. Residues Asn-258 and 315-317 (GIT) each bind substrate.

Belongs to the succinate/malate CoA ligase beta subunit family. Heterotetramer of two alpha and two beta subunits. It depends on Mg(2+) as a cofactor.

It carries out the reaction succinate + ATP + CoA = succinyl-CoA + ADP + phosphate. The enzyme catalyses GTP + succinate + CoA = succinyl-CoA + GDP + phosphate. It participates in carbohydrate metabolism; tricarboxylic acid cycle; succinate from succinyl-CoA (ligase route): step 1/1. Its function is as follows. Succinyl-CoA synthetase functions in the citric acid cycle (TCA), coupling the hydrolysis of succinyl-CoA to the synthesis of either ATP or GTP and thus represents the only step of substrate-level phosphorylation in the TCA. The beta subunit provides nucleotide specificity of the enzyme and binds the substrate succinate, while the binding sites for coenzyme A and phosphate are found in the alpha subunit. The protein is Succinate--CoA ligase [ADP-forming] subunit beta of Deinococcus radiodurans (strain ATCC 13939 / DSM 20539 / JCM 16871 / CCUG 27074 / LMG 4051 / NBRC 15346 / NCIMB 9279 / VKM B-1422 / R1).